Consider the following 419-residue polypeptide: MTTQLEQAWELAKQRFAAVGIDVEEALRQLDRLPVSMHCWQGDDVSGFENPEGSLTGGIQATGNYPGKARNASELRADLEQAMRLIPGPKRLNLHAIYLESDTPVSRDQIKPEHFKNWVEWAKANQLGLDFNPSCFSHPLSADGFTLSHPDDSIRQFWIDHCKASRRVSAYFGEQLGTPSVMNIWIPDGMKDITVDRLAPRQRLLAALDEVISEKLNPAHHIDAVESKLFGIGAESYTVGSNEFYMGYATSRQTALCLDAGHFHPTEVISDKISAAMLYVPQLLLHVSRPVRWDSDHVVLLDDETQAIASEIVRHDLFDRVHIGLDFFDASINRIAAWVIGTRNMKKALLRALLEPTAELRKLEAAGDYTARLALLEEQKSLPRQAVWEMYCQRHDTPAGSEWLESVRAYEKAILSQRG.

H262, D294, and D296 together coordinate Mn(2+).

The protein belongs to the rhamnose isomerase family. As to quaternary structure, homotetramer. Mn(2+) is required as a cofactor.

It localises to the cytoplasm. The enzyme catalyses L-rhamnopyranose = L-rhamnulose. The protein operates within carbohydrate degradation; L-rhamnose degradation; glycerone phosphate from L-rhamnose: step 1/3. In terms of biological role, catalyzes the interconversion of L-rhamnose and L-rhamnulose. The sequence is that of L-rhamnose isomerase from Shigella flexneri serotype 5b (strain 8401).